The sequence spans 239 residues: Small ribosomal subunit protein uS2 (239 aa).

This sequence belongs to the universal ribosomal protein uS2 family.

The polypeptide is Small ribosomal subunit protein uS2 (Prochlorococcus marinus (strain MIT 9313)).